The primary structure comprises 78 residues: RNA-binding protein KhpA (78 aa).

Positions 29–78 (TIIYELTVAKGDIGKIIGKEGRTIKAIRTLLVSVASRDNVKVSLEIMEER) constitute a KH domain.

It belongs to the KhpA RNA-binding protein family.

It localises to the cytoplasm. A probable RNA-binding protein. The sequence is that of RNA-binding protein KhpA from Chlamydia trachomatis serovar D (strain ATCC VR-885 / DSM 19411 / UW-3/Cx).